Here is a 263-residue protein sequence, read N- to C-terminus: 2-keto-4-pentenoate hydratase 1 (263 aa).

This sequence belongs to the hydratase/decarboxylase family. MhpD subfamily. Requires a divalent metal cation as cofactor.

It catalyses the reaction (S)-4-hydroxy-2-oxopentanoate = (2Z)-2-hydroxypenta-2,4-dienoate + H2O. Its pathway is aromatic compound metabolism; 3-phenylpropanoate degradation. Catalyzes the conversion of 2-hydroxypentadienoic acid (enolic form of 2-oxopent-4-enoate) to 4-hydroxy-2-ketopentanoic acid. This Dechloromonas aromatica (strain RCB) protein is 2-keto-4-pentenoate hydratase 1.